We begin with the raw amino-acid sequence, 1330 residues long: MERPAILPSGQILSNIEVHSHRALFDIFKRFRSDDNNLYGAEFDALLGTYCSTLSLVRFLELGLSVACVCTKFPELSYVAEGTIQFEVQQPMIARDGPHPADQPVHNYMIKRLDRRSLNAAFSIAVEALGLISGENLDGTHISSAMRLRAIQQLARNVQAVLDSFERGTADQMLRVLMEKAPPLSLLAPFTLYEGRLADRVACAALVSELKRRVRDDTFFLTKHERNKDAVLDRLSDLVNCTAPSVAVARMTHADTQGRPVDGVLVTTAGVRQRLLHHVLTLADTHADVPVTYGEMVIANTNLVTALVMGKAVSNMDDVARYLLGGEPAPDDGKPVGSARVRADLVVVGDRLVFLEALEKRVYQATQVPYPLVGNLDVTFVMPLGVFKPAADRYARHAGSFAPTPGLPDPRTHPPRAVHFFNKDGVPCHVTFEHAMGTLCHPSFLDVDATLAALRQEPAEVQCAFGAYVADARPDALVGLMQRFLEEWPGMMPVRPRWAAPAAADQLLAPGNADLRLELHPAFDFFVAPEVDVPGPFAVPQVMGQVRAMPRIINGNIPLALCPVDFRDARGFELSVDRHRLAPATVAAVRGAFRDANYPMVFYIIEAVIHGSERTFCALARLVAQCIQSYWRNTHNAAFVNNFYMVMYINTYLGNGELPEDCAAVYKDLLEHVHALRRLIGEFTLPGDPLGNQPQEELNHALADATLLPPLIWDCDPILYRDGLAERLPELRVNGAHFQHILWVEMAQVNFRNVGGGLVHNRPVRNENQPLHPHHDAEWSVLSKIYYYAVVPAFSRGNCCTMGVRYDRVYQLVQTMVVPETDEEVGTDDPRHPLHPRNLVPNSLNVLFHNACVAVDADAMLILQETVTNMAERTTPLLASVAPDAGMATVATRDMRTHDGSLHHGLLMMAYQPNDATLLEGAFFYPAPVNALFACADHLGAMRDVGAEVRAAAQHVPCVPHFLGANYYATVRQPVAQHAAQSRADENTLSYALMAGYFKMSPVAFTHQLRRQLHPGFALTVVRQDRFATENVLFAEKASESYFMGQMQVARTESGGGLHLQLTQPRANVDLGVGFTAAYAAAALRAPVTDMGNLPQNLFATRGAPPMLDADADDYLRRTVNAGNRLAPVPVFGQMLPQVPAGLARGQQSVCEFIATPVSVDLAYFRRACNPRGRAAGEVHGEEGLMFDHSHADPAHPHRATANPWASQRHSYADRLYNGQYNMSGPAYSPCFKFFTPAEAVAKSRGLARLIADTGAAASPTSNGEYQFKRPVGAGELVEDPCALFQEAYPPLCASDSALLRTPLGAEEHFAQYLIRDESPLKGCFQHASA.

Belongs to the herpesviridae major capsid protein family. In terms of assembly, homomultimer. Makes the hexons and eleven out of twelve pentons. Interacts with triplex proteins 1/TRX1 and 2/TRX2; adjacent capsomers are linked together in groups of three by triplexes, heterotrimeric complexes composed of one molecule of TRX1 and two molecules of TRX2. Interacts with scaffold protein; this interaction allows efficient MCP transport to the host nucleus. Interacts with capsid vertex component 2/CVC2. Interacts with the small capsomere-interacting protein/SCP.

The protein localises to the virion. The protein resides in the host nucleus. Its function is as follows. Self-assembles to form an icosahedral capsid with a T=16 symmetry, about 200 nm in diameter, and consisting of 150 hexons and 12 pentons (total of 162 capsomers). Hexons form the edges and faces of the capsid and are each composed of six MCP molecules. In contrast, one penton is found at each of the 12 vertices. Eleven of the pentons are MCP pentamers, while the last vertex is occupied by the portal complex. The capsid is surrounded by a layer of proteinaceous material designated the tegument which, in turn, is enclosed in an envelope of host cell-derived lipids containing virus-encoded glycoproteins. In Sus scrofa (Pig), this protein is Major capsid protein.